The following is a 354-amino-acid chain: Selenide, water dikinase (354 aa).

The active site involves Cys23. ATP is bound by residues Lys26 and Thr54–Asp56. Asp57 serves as a coordination point for Mg(2+). Residues Asp74, Asp97, and Gly145 to Ser147 contribute to the ATP site. Asp97 provides a ligand contact to Mg(2+). Asp233 contacts Mg(2+).

The protein belongs to the selenophosphate synthase 1 family. Class I subfamily. Homodimer. Mg(2+) is required as a cofactor.

The enzyme catalyses hydrogenselenide + ATP + H2O = selenophosphate + AMP + phosphate + 2 H(+). Its function is as follows. Synthesizes selenophosphate from selenide and ATP. This Burkholderia cenocepacia (strain ATCC BAA-245 / DSM 16553 / LMG 16656 / NCTC 13227 / J2315 / CF5610) (Burkholderia cepacia (strain J2315)) protein is Selenide, water dikinase.